Consider the following 36-residue polypeptide: Cytochrome b6-f complex subunit 5 (36 aa).

The helical transmembrane segment at 5-25 threads the bilayer; it reads LLSGIVLGLIPITILGLLMAA.

This sequence belongs to the PetG family. As to quaternary structure, the 4 large subunits of the cytochrome b6-f complex are cytochrome b6, subunit IV (17 kDa polypeptide, PetD), cytochrome f and the Rieske protein, while the 4 small subunits are PetG, PetL, PetM and PetN. The complex functions as a dimer.

It localises to the plastid. Its subcellular location is the chloroplast thylakoid membrane. Its function is as follows. Component of the cytochrome b6-f complex, which mediates electron transfer between photosystem II (PSII) and photosystem I (PSI), cyclic electron flow around PSI, and state transitions. PetG is required for either the stability or assembly of the cytochrome b6-f complex. The chain is Cytochrome b6-f complex subunit 5 from Cyanidioschyzon merolae (strain NIES-3377 / 10D) (Unicellular red alga).